The sequence spans 296 residues: Prostate androgen-regulated mucin-like protein 1 homolog (296 aa).

Residues 1–20 (MVCKVLIALCIFTAGLRVQG) form the signal peptide. Residues 21–244 (SPTVPLPVSL…EVENALSSGS (224 aa)) are Extracellular-facing. 2 N-linked (GlcNAc...) asparagine glycosylation sites follow: N61 and N95. The tract at residues 72–220 (LTSQLPTDHR…SPQDTEPGKV (149 aa)) is disordered. The segment covering 78 to 95 (TDHREEAVTSPPLKRDVN) has biased composition (basic and acidic residues). Polar residues predominate over residues 96–110 (STDSSPAGFPSTSSD). Positions 139–167 (LLSSQAPTSATTSPATSLSESLSASVTSS) are enriched in low complexity. Residues 168-177 (HNSTVANIQP) are compositionally biased toward polar residues. N169 is a glycosylation site (N-linked (GlcNAc...) asparagine). Positions 206-217 (VPKEKSPQDTEP) are enriched in basic and acidic residues. The chain crosses the membrane as a helical span at residues 245–265 (IAAITVTVIAVVLLVFGGAAY). At 266-296 (LKIRHSSYGRLLDDHDYGSWGNYNNPLYDDS) the chain is on the cytoplasmic side. A Phosphoserine modification is found at S284.

Belongs to the PARM family. Post-translationally, highly N-glycosylated and O-glycosylated.

The protein resides in the cell membrane. Its subcellular location is the golgi apparatus membrane. It localises to the endosome membrane. May regulate TLP1 expression and telomerase activity, thus enabling certain prostatic cells to resist apoptosis. In Mus musculus (Mouse), this protein is Prostate androgen-regulated mucin-like protein 1 homolog (Parm1).